Consider the following 282-residue polypeptide: MNTPEQSQLGKSSAYIDQYAPSLLFPLPRAPKREEIGVQGSQMPFFGADLWTAFELSWLNLRGKPQVALVHFTIPCETPNLIESKSFKLYLNSFNNTRLADAAEVQARLRTDLAEALWRGSEQKGSIGVKIIGLDRFDQEMVQELDGLLLDRLDVECTQYQPAPELLHANHEEAPVTETLVSHLLKSNCLVTGQPDWGSVQIRYSGAQIDQEGLLQYLVSFRNHNEFHEQCVERIFMDIWTRCRPLKLSVYARYTRRGGLDINPFRTSHPGALPANVRSARQ.

Substrate is bound at residue 82–84; that stretch reads IES. 84–85 serves as a coordination point for NADPH; the sequence is SK. Catalysis depends on Cys-189, which acts as the Thioimide intermediate. Residue Asp-196 is the Proton donor of the active site. Position 228–229 (228–229) interacts with substrate; sequence HE. 257–258 is a binding site for NADPH; it reads RG.

The protein belongs to the GTP cyclohydrolase I family. QueF type 2 subfamily. Homodimer.

Its subcellular location is the cytoplasm. It catalyses the reaction 7-aminomethyl-7-carbaguanine + 2 NADP(+) = 7-cyano-7-deazaguanine + 2 NADPH + 3 H(+). Its pathway is tRNA modification; tRNA-queuosine biosynthesis. Catalyzes the NADPH-dependent reduction of 7-cyano-7-deazaguanine (preQ0) to 7-aminomethyl-7-deazaguanine (preQ1). In Delftia acidovorans (strain DSM 14801 / SPH-1), this protein is NADPH-dependent 7-cyano-7-deazaguanine reductase.